We begin with the raw amino-acid sequence, 571 residues long: MVTKILKAPDGSPSDVERIKKESDYLRGTLKEVMLDRISAGIPDDDNRLMKHHGSYLQDDRDLRNERQKQKLEPAYQFMLRVRMPGGVSTPEQWLVMDDLSQKYGNGTLKLTTRETFQMHGILKWNMKKTIQTIHSALLDTIAACGDVNRNVMCASNPYQSEIHSEVYEWSKKLSDDLLPRTRAYHEIWLDEERVAGTPEEEVEPMYGPLYLPRKFKIGIAVPPSNDIDVFSQDLGFIAIVEDGKLIGFNVAIGGGMGMTHGDTATYPQLAKVIGFCRPEQMYDVAEKTITIQRDYGNRSVRKNARFKYTVDRLGLENVKEELENRLGWSLEEAKPYHFDHNGDRYGWVEGIEDKWHFTLFVEGGRITDYDDYKLMTGLREIAKVHTGEFRLTANQNLMIANVSSDKKEEISALIEQYGLTDGKHYSALRRSSMACVALPTCGLAMAEAERYLPTLLDKIEEIIDENGLRDQEITIRMTGCPNGCARHALGEIGFIGKAPGKYNMYLGAAFDGSRLSKMYRENIGEADILSELRILLSRYAKEREEGEHFGDFVIRAGIIKATTDGTNFHD.

[4Fe-4S] cluster contacts are provided by cysteine 436, cysteine 442, cysteine 481, and cysteine 485. Cysteine 485 is a siroheme binding site.

It belongs to the nitrite and sulfite reductase 4Fe-4S domain family. As to quaternary structure, alpha(8)-beta(8). The alpha component is a flavoprotein, the beta component is a hemoprotein. Siroheme serves as cofactor. Requires [4Fe-4S] cluster as cofactor.

The catalysed reaction is hydrogen sulfide + 3 NADP(+) + 3 H2O = sulfite + 3 NADPH + 4 H(+). The protein operates within sulfur metabolism; hydrogen sulfide biosynthesis; hydrogen sulfide from sulfite (NADPH route): step 1/1. Its function is as follows. Component of the sulfite reductase complex that catalyzes the 6-electron reduction of sulfite to sulfide. This is one of several activities required for the biosynthesis of L-cysteine from sulfate. This Bacillus subtilis (strain 168) protein is Sulfite reductase [NADPH] hemoprotein beta-component (cysI).